The following is a 295-amino-acid chain: Bifunctional protein FolD (295 aa).

Residues 166–168 (GRS), Ser-195, and Ile-236 each bind NADP(+).

This sequence belongs to the tetrahydrofolate dehydrogenase/cyclohydrolase family. In terms of assembly, homodimer.

The catalysed reaction is (6R)-5,10-methylene-5,6,7,8-tetrahydrofolate + NADP(+) = (6R)-5,10-methenyltetrahydrofolate + NADPH. It carries out the reaction (6R)-5,10-methenyltetrahydrofolate + H2O = (6R)-10-formyltetrahydrofolate + H(+). It functions in the pathway one-carbon metabolism; tetrahydrofolate interconversion. Its function is as follows. Catalyzes the oxidation of 5,10-methylenetetrahydrofolate to 5,10-methenyltetrahydrofolate and then the hydrolysis of 5,10-methenyltetrahydrofolate to 10-formyltetrahydrofolate. The polypeptide is Bifunctional protein FolD (Chlorobium phaeobacteroides (strain DSM 266 / SMG 266 / 2430)).